Here is a 484-residue protein sequence, read N- to C-terminus: Probable glycine dehydrogenase (decarboxylating) subunit 2 (484 aa).

Lys-264 is modified (N6-(pyridoxal phosphate)lysine).

The protein belongs to the GcvP family. C-terminal subunit subfamily. As to quaternary structure, the glycine cleavage system is composed of four proteins: P, T, L and H. In this organism, the P 'protein' is a heterodimer of two subunits. It depends on pyridoxal 5'-phosphate as a cofactor.

It catalyses the reaction N(6)-[(R)-lipoyl]-L-lysyl-[glycine-cleavage complex H protein] + glycine + H(+) = N(6)-[(R)-S(8)-aminomethyldihydrolipoyl]-L-lysyl-[glycine-cleavage complex H protein] + CO2. Functionally, the glycine cleavage system catalyzes the degradation of glycine. The P protein binds the alpha-amino group of glycine through its pyridoxal phosphate cofactor; CO(2) is released and the remaining methylamine moiety is then transferred to the lipoamide cofactor of the H protein. The protein is Probable glycine dehydrogenase (decarboxylating) subunit 2 of Legionella pneumophila (strain Paris).